The following is a 168-amino-acid chain: 2-C-methyl-D-erythritol 2,4-cyclodiphosphate synthase (168 aa).

The a divalent metal cation site is built by D11 and H13. 4-CDP-2-C-methyl-D-erythritol 2-phosphate-binding positions include 11-13 and 41-42; these read DVH and HS. A divalent metal cation is bound at residue H49. Residues 63–65, 68–72, 139–142, F146, and R149 contribute to the 4-CDP-2-C-methyl-D-erythritol 2-phosphate site; these read DIG, FPDTD, and TTTE.

The protein belongs to the IspF family. In terms of assembly, homotrimer. The cofactor is a divalent metal cation.

It carries out the reaction 4-CDP-2-C-methyl-D-erythritol 2-phosphate = 2-C-methyl-D-erythritol 2,4-cyclic diphosphate + CMP. It participates in isoprenoid biosynthesis; isopentenyl diphosphate biosynthesis via DXP pathway; isopentenyl diphosphate from 1-deoxy-D-xylulose 5-phosphate: step 4/6. Its function is as follows. Involved in the biosynthesis of isopentenyl diphosphate (IPP) and dimethylallyl diphosphate (DMAPP), two major building blocks of isoprenoid compounds. Catalyzes the conversion of 4-diphosphocytidyl-2-C-methyl-D-erythritol 2-phosphate (CDP-ME2P) to 2-C-methyl-D-erythritol 2,4-cyclodiphosphate (ME-CPP) with a corresponding release of cytidine 5-monophosphate (CMP). In Psychrobacter cryohalolentis (strain ATCC BAA-1226 / DSM 17306 / VKM B-2378 / K5), this protein is 2-C-methyl-D-erythritol 2,4-cyclodiphosphate synthase.